Consider the following 88-residue polypeptide: DNA-directed RNA polymerase subunit omega (88 aa).

It belongs to the RNA polymerase subunit omega family. As to quaternary structure, the RNAP catalytic core consists of 2 alpha, 1 beta, 1 beta' and 1 omega subunit. When a sigma factor is associated with the core the holoenzyme is formed, which can initiate transcription.

It catalyses the reaction RNA(n) + a ribonucleoside 5'-triphosphate = RNA(n+1) + diphosphate. Its function is as follows. Promotes RNA polymerase assembly. Latches the N- and C-terminal regions of the beta' subunit thereby facilitating its interaction with the beta and alpha subunits. This chain is DNA-directed RNA polymerase subunit omega, found in Clostridioides difficile (strain 630) (Peptoclostridium difficile).